Reading from the N-terminus, the 265-residue chain is Phosphonates import ATP-binding protein PhnC (265 aa).

One can recognise an ABC transporter domain in the interval 3–247 (LRLKQAFLHH…MLDTLYANEQ (245 aa)). Residue 36-43 (GPSGAGKS) participates in ATP binding.

Belongs to the ABC transporter superfamily. Phosphonates importer (TC 3.A.1.9.1) family. The complex is composed of two ATP-binding proteins (PhnC), two transmembrane proteins (PhnE) and a solute-binding protein (PhnD).

The protein localises to the cell inner membrane. It catalyses the reaction phosphonate(out) + ATP + H2O = phosphonate(in) + ADP + phosphate + H(+). Functionally, part of the ABC transporter complex PhnCDE involved in phosphonates import. Responsible for energy coupling to the transport system. This is Phosphonates import ATP-binding protein PhnC from Pseudomonas fluorescens (strain Pf0-1).